The following is a 282-amino-acid chain: Snake venom serine protease BmSP (282 aa).

Residues 1-18 form the signal peptide; sequence MVLIGVLASLLILQLSYS. Residues 19–56 constitute a propeptide that is removed on maturation; it reads KSLDDGAKESAYDDEIQQSSWGNSTVNTTLTETVVIQL. Asn41 and Asn45 each carry an N-linked (GlcNAc...) asparagine glycan. The Peptidase S1 domain occupies 57-280; sequence IMGGSECYKS…YIDWIKGIIA (224 aa). Cystine bridges form between Cys63–Cys195, Cys82–Cys98, Cys174–Cys241, Cys206–Cys220, and Cys231–Cys256. His97 (charge relay system) is an active-site residue. An N-linked (GlcNAc...) asparagine glycan is attached at Asn135. Asp142 serves as the catalytic Charge relay system. N-linked (GlcNAc...) asparagine glycans are attached at residues Asn149 and Asn153. The active-site Charge relay system is the Ser235.

The protein belongs to the peptidase S1 family. Snake venom subfamily. As to quaternary structure, monomer. In terms of tissue distribution, expressed by the venom gland.

It localises to the secreted. In terms of biological role, snake venom serine protease that may act in the hemostasis system of the prey. The chain is Snake venom serine protease BmSP from Bungarus multicinctus (Many-banded krait).